The chain runs to 349 residues: Protein DMR6-LIKE OXYGENASE 1 (349 aa).

The region spanning 197 to 296 (HAQHMAFNYY…RLSIPTFYFP (100 aa)) is the Fe2OG dioxygenase domain. Tyrosine 206 is a 2-oxoglutarate binding site. Residues histidine 221, aspartate 223, and histidine 277 each coordinate Fe cation. Residues arginine 287 and serine 289 each contribute to the 2-oxoglutarate site.

This sequence belongs to the iron/ascorbate-dependent oxidoreductase family. It depends on L-ascorbate as a cofactor. The cofactor is Fe(2+).

The catalysed reaction is salicylate + NADH + O2 + H(+) = 2,3-dihydroxybenzoate + NAD(+) + H2O. Its function is as follows. Converts salicylic acid (SA) to both 2,3-dihydroxybenzoic acid (2,3-DHBA) and 2,5-DHBA in vitro but only 2,3-DHBA in vivo. Component of a negative feedback regulation system of SA levels during senescence. Regulates both onset and progression of leaf senescence. Negative regulator of defense against Hyaloperonospora arabidopsidis. In terms of biological role, (Microbial infection) Confers susceptibility to the downy mildew pathogen Hyaloperonospora arabidopsidis. The polypeptide is Protein DMR6-LIKE OXYGENASE 1 (Arabidopsis thaliana (Mouse-ear cress)).